The chain runs to 415 residues: Glutamyl-tRNA reductase (415 aa).

Substrate-binding positions include 49-52 (TCNR), serine 104, 109-111 (EPQ), and glutamine 115. Residue cysteine 50 is the Nucleophile of the active site. 184-189 (GAGEMI) serves as a coordination point for NADP(+).

The protein belongs to the glutamyl-tRNA reductase family. Homodimer.

The enzyme catalyses (S)-4-amino-5-oxopentanoate + tRNA(Glu) + NADP(+) = L-glutamyl-tRNA(Glu) + NADPH + H(+). Its pathway is porphyrin-containing compound metabolism; protoporphyrin-IX biosynthesis; 5-aminolevulinate from L-glutamyl-tRNA(Glu): step 1/2. Its function is as follows. Catalyzes the NADPH-dependent reduction of glutamyl-tRNA(Glu) to glutamate 1-semialdehyde (GSA). This is Glutamyl-tRNA reductase from Neisseria meningitidis serogroup B (strain ATCC BAA-335 / MC58).